The primary structure comprises 240 residues: DNA repair protein RecO (240 aa).

This sequence belongs to the RecO family.

Its function is as follows. Involved in DNA repair and RecF pathway recombination. This chain is DNA repair protein RecO, found in Actinobacillus pleuropneumoniae serotype 5b (strain L20).